The chain runs to 312 residues: Homoserine kinase (312 aa).

94-104 (PLGRGLGSSAA) serves as a coordination point for ATP.

It belongs to the GHMP kinase family. Homoserine kinase subfamily.

The protein localises to the cytoplasm. The catalysed reaction is L-homoserine + ATP = O-phospho-L-homoserine + ADP + H(+). It participates in amino-acid biosynthesis; L-threonine biosynthesis; L-threonine from L-aspartate: step 4/5. Functionally, catalyzes the ATP-dependent phosphorylation of L-homoserine to L-homoserine phosphate. In Caldanaerobacter subterraneus subsp. tengcongensis (strain DSM 15242 / JCM 11007 / NBRC 100824 / MB4) (Thermoanaerobacter tengcongensis), this protein is Homoserine kinase.